The chain runs to 441 residues: Eukaryotic translation initiation factor 3 subunit E (441 aa).

The PCI domain occupies Ile-223–Pro-407.

This sequence belongs to the eIF-3 subunit E family. Component of the eukaryotic translation initiation factor 3 (eIF-3) complex (Potential). Binds to the translation initiation factors TIF3F1 and TIF3H1. Associates with the CSN (COP9 signalosome) complex. Interacts directly with CSN1, CSN4, CSN6A, CSN6B, CSN7, CSN8 and TIF3C1. Binds to 40S small ribosomal subunit S9 (RPS9B and RPS9C) via its N-terminal part. Interacts with the 26S proteasome subunit RPN12a via its C-terminal part. Also binds with At1g27930 and At4g30620.

It localises to the cytoplasm. It is found in the nucleus. Component of the eukaryotic translation initiation factor 3 (eIF-3) complex, which is involved in protein synthesis of a specialized repertoire of mRNAs and, together with other initiation factors, stimulates binding of mRNA and methionyl-tRNAi to the 40S ribosome. The eIF-3 complex specifically targets and initiates translation of a subset of mRNAs involved in cell proliferation (Potential). Negatively regulates translation during flower development. In Arabidopsis thaliana (Mouse-ear cress), this protein is Eukaryotic translation initiation factor 3 subunit E.